Reading from the N-terminus, the 228-residue chain is Prolactin (228 aa).

An N-terminal signal peptide occupies residues 1 to 29 (MCTKRSSLKGSLLLLLLISSLLLSRSVDS). Cys-33 and Cys-40 are disulfide-bonded. Ser-55, Ser-63, and Ser-119 each carry phosphoserine. 2 disulfides stabilise this stretch: Cys-87-Cys-203 and Cys-220-Cys-228.

This sequence belongs to the somatotropin/prolactin family. In terms of assembly, interacts with PRLR.

It is found in the secreted. Its function is as follows. Prolactin acts primarily on the mammary gland by promoting lactation. The chain is Prolactin (PRL) from Isoodon macrourus (Short-nosed bandicoot).